Reading from the N-terminus, the 493-residue chain is Putative BTB/POZ domain-containing protein L35 (493 aa).

The BTB domain maps to 16 to 87; that stretch reads TDLKLTLVDD…YLVDNKSEVD (72 aa).

The protein belongs to the mimivirus BTB/WD family.

This is Putative BTB/POZ domain-containing protein L35 from Acanthamoeba polyphaga (Amoeba).